The chain runs to 805 residues: DNA gyrase subunit B (805 aa).

Positions 431–546 (CEMYIVEGDS…NECVYIAQPP (116 aa)) constitute a Toprim domain. The Mg(2+) site is built by Glu437, Asp511, and Asp513.

It belongs to the type II topoisomerase GyrB family. Heterotetramer, composed of two GyrA and two GyrB chains. In the heterotetramer, GyrA contains the active site tyrosine that forms a transient covalent intermediate with DNA, while GyrB binds cofactors and catalyzes ATP hydrolysis. Mg(2+) serves as cofactor. Requires Mn(2+) as cofactor. The cofactor is Ca(2+).

It is found in the cytoplasm. The catalysed reaction is ATP-dependent breakage, passage and rejoining of double-stranded DNA.. A type II topoisomerase that negatively supercoils closed circular double-stranded (ds) DNA in an ATP-dependent manner to modulate DNA topology and maintain chromosomes in an underwound state. Negative supercoiling favors strand separation, and DNA replication, transcription, recombination and repair, all of which involve strand separation. Also able to catalyze the interconversion of other topological isomers of dsDNA rings, including catenanes and knotted rings. Type II topoisomerases break and join 2 DNA strands simultaneously in an ATP-dependent manner. This is DNA gyrase subunit B from Chlamydia pneumoniae (Chlamydophila pneumoniae).